The primary structure comprises 100 residues: Co-chaperonin GroES (100 aa).

The protein belongs to the GroES chaperonin family. In terms of assembly, heptamer of 7 subunits arranged in a ring. Interacts with the chaperonin GroEL.

Its subcellular location is the cytoplasm. Together with the chaperonin GroEL, plays an essential role in assisting protein folding. The GroEL-GroES system forms a nano-cage that allows encapsulation of the non-native substrate proteins and provides a physical environment optimized to promote and accelerate protein folding. GroES binds to the apical surface of the GroEL ring, thereby capping the opening of the GroEL channel. The sequence is that of Co-chaperonin GroES from Mycobacterium tuberculosis (strain CDC 1551 / Oshkosh).